The chain runs to 282 residues: Elongation factor Ts (282 aa).

Positions 80-83 (TDFV) are involved in Mg(2+) ion dislocation from EF-Tu.

It belongs to the EF-Ts family.

The protein resides in the cytoplasm. Functionally, associates with the EF-Tu.GDP complex and induces the exchange of GDP to GTP. It remains bound to the aminoacyl-tRNA.EF-Tu.GTP complex up to the GTP hydrolysis stage on the ribosome. This is Elongation factor Ts from Chlamydia felis (strain Fe/C-56) (Chlamydophila felis).